The following is a 486-amino-acid chain: Zinc finger CCCH domain-containing protein 49 (486 aa).

The segment at 157-184 (RNRAHVCSFYVRGECTRGAECPYRHEMP) adopts a C3H1-type zinc-finger fold. Residues 228–301 (RTLYIGGLDS…VRLKLMWGKP (74 aa)) form the RRM domain. Disordered stretches follow at residues 329–348 (SQQQSGDQPQPPGMEGQQQP) and 379–486 (LVES…NGMT). Composition is skewed to low complexity over residues 389 to 407 (PGPQQAGQGQASSSSGQSY) and 415 to 430 (YHGGQYPPYYPPYGGY). The span at 431–444 (MPPPRMPYQQPPQY) shows a compositional bias: pro residues. Over residues 445–486 (PAYQPMLAPPAQSQASSLQQPAPATQQLGQGPQQQTTQNGMT) the composition is skewed to low complexity.

The chain is Zinc finger CCCH domain-containing protein 49 from Oryza sativa subsp. japonica (Rice).